The following is a 231-amino-acid chain: Equistatin (231 aa).

The signal sequence occupies residues 1 to 32; that stretch reads MALSQNQAKFSKGFVVMIWVLFIACAITSTEA. Thyroglobulin type-1 domains follow at residues 34 to 95, 102 to 163, and 167 to 231; these read LTKC…SPDC, LTLC…RPTC, and LSEC…RPTC. Cystine bridges form between C37/C56, C67/C74, C76/C95, C105/C124, C135/C142, C144/C163, C170/C191, C202/C209, and C211/C231.

It belongs to the protease inhibitor I31 family.

The protein resides in the secreted. Potent inhibitor of papain-like cysteine proteinases (Ki=0.18-0.57 nM on papain), as well as of the aspartic proteinase cathepsin D (Ki=0.3-05 nM). This chain is Equistatin, found in Actinia equina (Beadlet anemone).